Reading from the N-terminus, the 936-residue chain is Protein translocase subunit SecA (936 aa).

ATP is bound by residues Gln-90, 108–112, and Asp-499; that span reads GEGKT.

This sequence belongs to the SecA family. As to quaternary structure, monomer and homodimer. Part of the essential Sec protein translocation apparatus which comprises SecA, SecYEG and auxiliary proteins SecDF. Other proteins may also be involved.

Its subcellular location is the cell inner membrane. It localises to the cellular thylakoid membrane. The protein localises to the cytoplasm. It carries out the reaction ATP + H2O + cellular proteinSide 1 = ADP + phosphate + cellular proteinSide 2.. In terms of biological role, part of the Sec protein translocase complex. Interacts with the SecYEG preprotein conducting channel. Has a central role in coupling the hydrolysis of ATP to the transfer of proteins into and across the cell membrane, serving as an ATP-driven molecular motor driving the stepwise translocation of polypeptide chains across the membrane. Probably participates in protein translocation into and across both the cytoplasmic and thylakoid membranes in cyanobacterial cells. The chain is Protein translocase subunit SecA from Trichodesmium erythraeum (strain IMS101).